The chain runs to 455 residues: P2X purinoceptor 5 (455 aa).

At 1–34 (MGQAAWKGFVLSLFDYKTAKFVVAKSKKVGLLYR) the chain is on the cytoplasmic side. Residues 35-55 (VLQLIILLYLLIWVFLIKKSY) form a helical membrane-spanning segment. Topologically, residues 56-341 (QDIDTSLQSA…SIIPTVINIG (286 aa)) are extracellular. The ATP site is built by K69 and K71. The N-linked (GlcNAc...) asparagine glycan is linked to N77. Intrachain disulfides connect C118–C169, C129–C152, and C135–C163. N157 carries an N-linked (GlcNAc...) asparagine glycan. T189 lines the ATP pocket. N202 is a glycosylation site (N-linked (GlcNAc...) asparagine). 2 cysteine pairs are disulfide-bonded: C220-C229 and C263-C272. Residues N294, R296, and K314 each contribute to the ATP site. Residues 342–362 (SGLALMGAGAFFCDLVLIYLI) form a helical membrane-spanning segment. Residues 363–455 (RKSEFYRDKK…QSQILHPVKT (93 aa)) are Cytoplasmic-facing. Acidic residues predominate over residues 384-401 (NVEVEANEMEQERPEDEP). The interval 384–422 (NVEVEANEMEQERPEDEPLERVRQDEQSQELAQSGRKQN) is disordered. Residues 412–422 (QELAQSGRKQN) are compositionally biased toward polar residues.

Belongs to the P2X receptor family. In terms of assembly, functional P2XRs are organized as homomeric and heteromeric trimers. Homotrimer. Forms heterotrimer with P2RX1. As to expression, predominantly expressed in heart but are also present in brain, spinal cord and adrenal gland.

It localises to the cell membrane. The catalysed reaction is Na(+)(in) = Na(+)(out). It carries out the reaction Ca(2+)(in) = Ca(2+)(out). It catalyses the reaction chloride(in) = chloride(out). Activated by ATP. Slowly desensitizing. Not activated by ATP agonist alpha/beta-methylene-ATP. Highly sensitive to the antagonists suramin and PPADS. ATP-gated nonselective transmembrane cation channel. Permeable to potassium, sodium and calcium. Unlike other P2RX receptors, the P2X5 receptor is also permeable to chloride. Acts as an important regulator of inflammatory-related bone loss and osteoclast multinucleation. This is P2X purinoceptor 5 (P2rx5) from Rattus norvegicus (Rat).